The chain runs to 2364 residues: MTVSNNKKFEENYVLASDIEEKEKLLGTLIGGSPQYFYYNVIHLLNVDPTLSDSKNREKYQKLMKDWSPESKPIPVTPYGGNNNYESTQQYKSVDLRQKLLSFRQDNVNPSALANNVNDMFEELRYLLSLTFSYTQTTHQTSPTTETTTTPSSSSSSSHDDKSESTLDESLVNKKTVIESIINQYPYKVDYISPNSFEYVLNNFTLPESAEKSIVQKLKYPIVPNDKLQQLLSHHKGSFGSLKIHENLTLEQMEKHIEKNPEHLDSAYVKLYLEKLLPTNELHDWETLKPVQEQFYQSASKFVSNLPTSLNTFKLLIYHHYIKFQISDNKYDQSIIEKYFQLPRDTYYYVEPDRLKSNPQLSKFNDSFNGLKSVSQDDDEKLISFLLKKLFLKENSIKSYQSYFRPNYLNLILAESKLLSNDSSPEKWIEMIDNHTKVQELKDRVDIEFLPTNREYYHPDDDVVIECAIKNVNTLLVKVFEISTFNYYKSENKKIDSNINLDGLIASQELSFDYSEQAPIEKVEKKFDFPNLKGKRGIFVIEFIGNGKSSRSMIQKGDLHFIVETSPIGQVIKIIDQDSIKVQKSSVYIDGNAYNSNDDGDIKIPFSSSTSQKSIILMAKIGDSDVFASLKKFTHQSEHYSLSGGIFVENSSLLQNEKAPIVVRVKLFLGDTQISNNYLEEPSLTITSSDNSESPVVNSKEIKPFALFDNKESVYQYKVQEGLNSLTVRFEAKVRALSRNNNQETLSFESTFQVNTINQTDQISEFYLERCLAKDGCSLGYQLCHLGKGGDPFSHLDVSMDFQHWLTSERIYTTLKTDKNGKIHLGSLADIEQLNVNGSYATFNFPIKRQQQFTYPSQINIKLGETIRLPYLGNEKSVSHSQINFFQLGGVDDRNFVVHDLLKKSVTIENKNELLINGLGVGRYLLILAGSIQSSNTVEILIDVVDGQFREGYLVGPSRIVSYNESNVKSLFFDTNIDTKHNQLQVKFKNHSPSTRVHVFSSYFEPTNSLNSSLSLSRGTSQSYQEYSVKPKSLYFNGRSLGDEVNYILNRKTSKKLLPGNSLKKPSLLVQPWSIGKTTNSTNTLKQASKYNESEVKDEKSMRNRQVEKRRVSSTNRSPFLEFLSHPSILLLNLEPSSTDGIVNIDLSQLVEAGSTIHIHAVDNDSIFTKEIVISDPSSSSSINHFKDTKLVRPLDSSLHYKEEKLITTVEPNSPFEILNVNSSKYTVYDSLDKVLSLMKTLNKSYLQDFSFIAEWESLSFEKKKEKFSKFTCHELNFFIYKKDKEFFDQVVLPLVQTKGYKTFIDHYLCADRKKLEIFVIDSNRFNTLNALEMVLLGELFPEHSDSISNLLKQKVGFSPISPSQYDTNFKIALNQLDTDIESLKSGDDDLYDDGSNLEPMSVGGGGGFGYNNNSNNNNNTTNSNSFGDAKRAPMKKKMVNKESTSLMMDCAAPMMMMASAPCPAPGAVPMAALRSARLASASPAPPAPITRAYEAAQIYQPIEKTEELAETYYYKQLNPHSSLIPVNEFWLDYANHIKSQSKTPFVSKYIAFISSSFAESMMALSVLDFPFTVKDNTTQVRPKNGKLSMKPTTPIVVFHQELVSGSIEKQSDILVTQHFFDPQNQFTYIDGEQEELYINDQFLVSKVYGAMVVIANLSSKQKKLDALLEIPKGSIAVGPSPFVTRSKSVNLSAYSTTRLQYYFYFPEAGKFPHFPAHVSEKQNIIANVTPFTFSVVLKPSIVNHLSWEYIANQGTLESILEYLSKNNLYRVDFYHLYHRYTDKKVWDKVIELLKKLKFYESITWSFSIHHKNFVYLKDYLSEQIHSLSMKSIDAPSIYVDPFENNFIKFLEYSPLVNSRTHQIGDERKILNNKLSNQYYEFCSLLSLKLNPSDTELLSLAYYLLLQDRFDESIKIMKRIGKHPVSIPKLISSSTTTDSKSTHSSVISSSSSSNLSTTTDSSKDKKKLEKEEKQREKERKQKEKEDKKREKEELKKKEKEEKKKKEEEKKLKKKSGSEATSPSVDPATPTTTTTTEATTTTTTTTATSQESIKPEKIASDDEHDDHHHDEHDEEDDDDEPLIDMSEFNQPSCLPEMKVQYDYLLSYLDFFNPNPTVAAENSKKYENYPVQRWNSLFKDLRNKVDQVSNKDSVEIDYEKEIDRERRQNKMASNEPTFDISSESNRTISVNYSNLVDITVSYYVMDIEHLFSTNPFVQQELGHFLYVTPNKKESFLLKDKSGTFNFKIPNEFANSNVVIDVVSAQIHHNITVYSNNLAVYITEKVGQLRVVHKQKSQPISKTYIKVYSKNKNGSVEFFKDGYTDIAGYFDYSTVSSLDISNVSKLSILVLSNQYGAVIKEAKPPGF.

Over residues 138 to 157 (THQTSPTTETTTTPSSSSSS) the composition is skewed to low complexity. Disordered stretches follow at residues 138 to 168 (THQT…STLD), 1087 to 1111 (QASK…EKRR), 1412 to 1435 (NNNS…RAPM), and 1929 to 2088 (KLIS…SEFN). The segment covering 1092–1111 (NESEVKDEKSMRNRQVEKRR) has biased composition (basic and acidic residues). 2 stretches are compositionally biased toward low complexity: residues 1412 to 1428 (NNNS…NSFG) and 1932 to 1960 (SSST…TTTD). A coiled-coil region spans residues 1960–2017 (DSSKDKKKLEKEEKQREKERKQKEKEDKKREKEELKKKEKEEKKKKEEEKKLKKKSGS). Basic and acidic residues predominate over residues 1961 to 2010 (SSKDKKKLEKEEKQREKERKQKEKEDKKREKEELKKKEKEEKKKKEEEKK). Low complexity predominate over residues 2027-2047 (ATPTTTTTTEATTTTTTTTAT). A compositionally biased stretch (basic and acidic residues) spans 2052-2070 (IKPEKIASDDEHDDHHHDE). Residues 2071 to 2081 (HDEEDDDDEPL) are compositionally biased toward acidic residues. Residues 2129 to 2173 (VQRWNSLFKDLRNKVDQVSNKDSVEIDYEKEIDRERRQNKMASNE) adopt a coiled-coil conformation.

As to quaternary structure, interacts with actin.

The protein localises to the nucleus. The protein resides in the cytoplasm. It localises to the cytoskeleton. The polypeptide is Actin-binding protein F (abpF) (Dictyostelium discoideum (Social amoeba)).